A 321-amino-acid polypeptide reads, in one-letter code: Lactamase-like protein notP (321 aa).

Zn(2+)-binding residues include His-108, His-110, Asp-112, and His-113. Asp-112 acts as the Proton donor/acceptor in catalysis.

Belongs to the metallo-beta-lactamase superfamily. Requires Zn(2+) as cofactor.

Its function is as follows. Lactamase-like protein; part of the gene cluster that mediates the biosynthesis of notoamide, a fungal indole alkaloid that belongs to a family of natural products containing a characteristic bicyclo[2.2.2]diazaoctane core. The first step of notoamide biosynthesis involves coupling of L-proline and L-tryptophan by the bimodular NRPS notE, to produce cyclo-L-tryptophan-L-proline called brevianamide F. The reverse prenyltransferase notF then acts as a deoxybrevianamide E synthase and converts brevianamide F to deoxybrevianamide E via reverse prenylation at C-2 of the indole ring leading to the bicyclo[2.2.2]diazaoctane core. Deoxybrevianamide E is further hydroxylated at C-6 of the indole ring, likely catalyzed by the cytochrome P450 monooxygenase notG, to yield 6-hydroxy-deoxybrevianamide E. 6-hydroxy-deoxybrevianamide E is a specific substrate of the prenyltransferase notC for normal prenylation at C-7 to produce 6-hydroxy-7-prenyl-deoxybrevianamide, also called notoamide S. As the proposed pivotal branching point in notoamide biosynthesis, notoamide S can be diverted to notoamide E through an oxidative pyran ring closure putatively catalyzed by either notH cytochrome P450 monooxygenase or the notD FAD-linked oxidoreductase. This step would be followed by an indole 2,3-epoxidation-initiated pinacol-like rearrangement catalyzed by the notB FAD-dependent monooxygenase leading to the formation of notoamide C and notoamide D. On the other hand notoamide S is converted to notoamide T by notH (or notD), a bifunctional oxidase that also functions as the intramolecular Diels-Alderase responsible for generation of (+)-notoamide T. To generate antipodal (-)-notoaminide T, notH' (or notD') in Aspergillus versicolor is expected to catalyze a Diels-Alder reaction leading to the opposite stereochemistry. The remaining oxidoreductase notD (or notH) likely catalyzes the oxidative pyran ring formation to yield (+)-stephacidin A. The FAD-dependent monooxygenase notI is highly similar to notB and is predicted to catalyze a similar conversion from (+)-stephacidin A to (-)-notoamide B via the 2,3-epoxidation of (+)-stephacidin A followed by a pinacol-type rearrangement. Finally, it remains unclear which enzyme could be responsible for the final hydroxylation steps leading to notoamide A and sclerotiamide. The function of notP in the notoamide biosynthesis has not been determined yet. The sequence is that of Lactamase-like protein notP from Aspergillus sp. (strain MF297-2).